Consider the following 89-residue polypeptide: uncharacterized protein (89 aa).

The chain crosses the membrane as a helical span at residues S20–I39.

Its subcellular location is the membrane. This is an uncharacterized protein from Escherichia coli (strain K12).